Reading from the N-terminus, the 101-residue chain is Pro-corazonin (101 aa).

The signal sequence occupies residues 1–16 (MLVLFVLSLVVSCALC). An Asparagine amide modification is found at asparagine 27. The propeptide occupies 31–101 (SNFPAEISAL…REKAPNNDNY (71 aa)).

The protein belongs to the corazonin family. Expressed in central brain and the retrocerebral complex but not in antennal lobes, optic lobes or in gnathal, thoracic and abdominal ganglia (at protein level).

The protein localises to the secreted. Its function is as follows. Cardioactive peptide. Corazonin is probably involved in the physiological regulation of the heart beat. The chain is Pro-corazonin from Camponotus floridanus (Florida carpenter ant).